We begin with the raw amino-acid sequence, 506 residues long: Sporulation kinase D (506 aa).

2 helical membrane-spanning segments follow: residues 17-37 and 250-270; these read VKLYIILVVIPAIVISFFVYE and LVLPLSCIIVLLNILFILVLY. Residues 298-505 enclose the Histidine kinase domain; that stretch reads STAHEIRNPL…EVTITLPVSA (208 aa). H301 is modified (phosphohistidine; by autocatalysis).

Oligomerizes, probably forms homodimers; oligomerization is assisted by FloT. Interacts with FloT.

It localises to the cell membrane. It carries out the reaction ATP + protein L-histidine = ADP + protein N-phospho-L-histidine.. Its function is as follows. Phosphorylates the sporulation-regulatory protein spo0F and, to a minor extent, is responsible for heterogeneous expression of spo0A during logarithmical growth. Also phosphorylates spo0A under biofilm growth conditions. This Bacillus subtilis (strain 168) protein is Sporulation kinase D (kinD).